Reading from the N-terminus, the 588-residue chain is MIQHPRIGIRPTIDGRRQGVRESLEVQTMNMAKSVADLISSTLKYPDGEPVECVISPSTIGRVPEAAASHELFKKSNVCATITVTPCWCYGSETMDMSPDIPHAIWGFNGTERPGAVYLAAVLASHAQKGIPAFGIYGRDVQEASDTAIPEDVKEKLLRYARAALATGLMRDTAYLSMGSVSMGIGGSIVNPDFFQEYLGMRNESVDMTEFTRRMDRGIYDPEEFERAMVWVKEHIKEGVDRNREDLILSKEEKEKQWEFVIKMFMIGRDLMVGNPRLAELGFEEEAVGHHALVAGFQGQRQWTDHFPNGDFMETFLNTQFDWNGIRKPFVFATENDSLNGVSMLFNYLLTNTPQIFADVRTYWSPEAVKRVTGHTLEGCAAAGFLHLINSGSCTLDGTGQATRDGKPVMKPFWELDESEVQAMLENTDFPPANREYFRGGGFSTRFLTKGDMPVTMVRLNLLKGVGPVLQIAEGYTLELPEDVHHTLDNRTDPGWPTTWFAPRLTGKGAFKSVYDVMNNWGANHGAITYGHIGADLITLASMLRIPVNMHNVPEEDIFRPKNWSLFGTEDLESADYRACQLLGPLHK.

Residues Glu-335 and Asp-359 each act as proton acceptor in the active site. Mn(2+)-binding residues include Glu-335, Asp-359, and His-525.

This sequence belongs to the L-fucose isomerase family. Mn(2+) is required as a cofactor.

It is found in the cytoplasm. It catalyses the reaction L-fucose = L-fuculose. The protein operates within carbohydrate degradation; L-fucose degradation; L-lactaldehyde and glycerone phosphate from L-fucose: step 1/3. Converts the aldose L-fucose into the corresponding ketose L-fuculose. The sequence is that of L-fucose isomerase from Streptococcus pneumoniae (strain Taiwan19F-14).